Consider the following 165-residue polypeptide: Putative inactive neutral ceramidase B (165 aa).

It belongs to the neutral ceramidase family. Ubiquitous. Expression is reduced with increasing age and in late-onset Alzheimer disease (LOAD) patients. This reduction is even more pronounced in patients with an affected mother.

In Homo sapiens (Human), this protein is Putative inactive neutral ceramidase B.